The chain runs to 467 residues: MGTTLAEKVWADHLVRKGSDGAPDLLYIDLMLMHEVTSPQAFEGLRLAGRKPRHVDQLIATEDHNTPTVDIDRPNPDKTSALQLTTLEKNCKEFGVRLHPLGDADQGIVHAFAPILGLTQPGMTIVCGDSHTSTHGAFGALAFGIGTSEVEHVMATQTLSLKPFKTMAINVEGKLPADATAKDIILAIIAKIGTGGGQGYVIEYRGEAIRNLTMDERMTVCNMSIEAGARAGMIAPDETTFEYLKGRPHAPEGELWDQAVAYWKTLKTDDDAVFDKVVDIDASTLGPYVTWGTNPGQGLPITASVPEPDKIADATKRAAAERAITYMGLKPGMPIKDIAVDTVFIGSCTNGRIDDLRQAAAIMKGHHKAENIHRVLVVPASSRVRLQAEKEGLDKVFEDFGAEWRNAGCSMCLGMNPDKLVPNERSISTSNRNFEGRQGKGSRTHLASPSVAAATAIRGTISSPADL.

The [4Fe-4S] cluster site is built by cysteine 348, cysteine 409, and cysteine 412. The interval asparagine 423 to proline 449 is disordered.

It belongs to the aconitase/IPM isomerase family. LeuC type 1 subfamily. In terms of assembly, heterodimer of LeuC and LeuD. It depends on [4Fe-4S] cluster as a cofactor.

The catalysed reaction is (2R,3S)-3-isopropylmalate = (2S)-2-isopropylmalate. It functions in the pathway amino-acid biosynthesis; L-leucine biosynthesis; L-leucine from 3-methyl-2-oxobutanoate: step 2/4. Its function is as follows. Catalyzes the isomerization between 2-isopropylmalate and 3-isopropylmalate, via the formation of 2-isopropylmaleate. The polypeptide is 3-isopropylmalate dehydratase large subunit (Bifidobacterium longum subsp. infantis (strain ATCC 15697 / DSM 20088 / JCM 1222 / NCTC 11817 / S12)).